A 305-amino-acid polypeptide reads, in one-letter code: Translation initiation factor eIF2B subunit alpha (305 aa).

An N-acetylserine modification is found at S2. T291 is modified (phosphothreonine).

This sequence belongs to the eIF-2B alpha/beta/delta subunits family. In terms of assembly, component of the translation initiation factor 2B (eIF2B) complex which is a heterodecamer of two sets of five different subunits: alpha, beta, gamma, delta and epsilon. Subunits alpha, beta and delta comprise a regulatory subcomplex and subunits epsilon and gamma comprise a catalytic subcomplex. Within the complex, the hexameric regulatory complex resides at the center, with the two heterodimeric catalytic subcomplexes bound on opposite sides.

It localises to the cytoplasm. It is found in the cytosol. Its function is as follows. Acts as a component of the translation initiation factor 2B (eIF2B) complex, which catalyzes the exchange of GDP for GTP on the eukaryotic initiation factor 2 (eIF2) complex gamma subunit. Its guanine nucleotide exchange factor activity is repressed when bound to eIF2 complex phosphorylated on the alpha subunit, thereby limiting the amount of methionyl-initiator methionine tRNA available to the ribosome and consequently global translation is repressed. It activates the translation of GCN4 in response to low amino acid, carbon, or purine availability, by suppressing the inhibitory effects of multiple uORFs present in the leader of GCN4 mRNA. It may promote either repression or activation of GCN4 expression depending on amino acid availability. Modulation of GCN3 regulatory function in response to amino acid availability occurs post-translationally. This chain is Translation initiation factor eIF2B subunit alpha, found in Saccharomyces cerevisiae (strain ATCC 204508 / S288c) (Baker's yeast).